The sequence spans 474 residues: Mitochondrial import inner membrane translocase subunit TIM44-1 (474 aa).

A mitochondrion-targeting transit peptide spans 1-54 (MAIRKIIRDLLITKQPLLRQLFHQRVLRANARSEFLPAIGYTSHRRFSVFTEFS). Residues 68–88 (ERTVKELKERTEEFKGVTEDL) are a coiled coil. Residues 132–143 (VKESFKLGKEEN) show a composition bias toward basic and acidic residues. The segment at 132–165 (VKESFKLGKEENAESASSSGTRASQGEKQQSGST) is disordered. Over residues 145–165 (ESASSSGTRASQGEKQQSGST) the composition is skewed to polar residues.

The protein belongs to the Tim44 family. Probable component of the PAM complex at least composed of a mitochondrial HSP70 protein, TIMM44 and TIMM14. The complex interacts with the TIMM23 component of the TIM17:23 complex. Expressed in roots, flowers, young cotyledons and leaves.

Its subcellular location is the mitochondrion inner membrane. In terms of biological role, essential component of the PAM complex, a complex required for the translocation of transit peptide-containing proteins from the inner membrane into the mitochondrial matrix in an ATP-dependent manner. Recruits mitochondrial HSP70 to drive protein translocation into the matrix using ATP as an energy source. This is Mitochondrial import inner membrane translocase subunit TIM44-1 (TIM44-1) from Arabidopsis thaliana (Mouse-ear cress).